The sequence spans 295 residues: Pyridoxal 5'-phosphate synthase subunit PdxS (295 aa).

D25 is a binding site for D-ribose 5-phosphate. The active-site Schiff-base intermediate with D-ribose 5-phosphate is the K82. A D-ribose 5-phosphate-binding site is contributed by G154. R166 is a D-glyceraldehyde 3-phosphate binding site. D-ribose 5-phosphate-binding positions include G215 and G236 to S237.

The protein belongs to the PdxS/SNZ family. As to quaternary structure, in the presence of PdxT, forms a dodecamer of heterodimers.

It catalyses the reaction aldehydo-D-ribose 5-phosphate + D-glyceraldehyde 3-phosphate + L-glutamine = pyridoxal 5'-phosphate + L-glutamate + phosphate + 3 H2O + H(+). It functions in the pathway cofactor biosynthesis; pyridoxal 5'-phosphate biosynthesis. Its function is as follows. Catalyzes the formation of pyridoxal 5'-phosphate from ribose 5-phosphate (RBP), glyceraldehyde 3-phosphate (G3P) and ammonia. The ammonia is provided by the PdxT subunit. Can also use ribulose 5-phosphate and dihydroxyacetone phosphate as substrates, resulting from enzyme-catalyzed isomerization of RBP and G3P, respectively. In Dictyoglomus turgidum (strain DSM 6724 / Z-1310), this protein is Pyridoxal 5'-phosphate synthase subunit PdxS.